Consider the following 609-residue polypeptide: Isocitrate dehydrogenase kinase/phosphatase (609 aa).

Residues 325–331 (APGIKGM) and K346 each bind ATP. Residue D381 is part of the active site.

It belongs to the AceK family.

The protein localises to the cytoplasm. It catalyses the reaction L-seryl-[isocitrate dehydrogenase] + ATP = O-phospho-L-seryl-[isocitrate dehydrogenase] + ADP + H(+). Its function is as follows. Bifunctional enzyme which can phosphorylate or dephosphorylate isocitrate dehydrogenase (IDH) on a specific serine residue. This is a regulatory mechanism which enables bacteria to bypass the Krebs cycle via the glyoxylate shunt in response to the source of carbon. When bacteria are grown on glucose, IDH is fully active and unphosphorylated, but when grown on acetate or ethanol, the activity of IDH declines drastically concomitant with its phosphorylation. In Acidovorax sp. (strain JS42), this protein is Isocitrate dehydrogenase kinase/phosphatase.